The chain runs to 487 residues: Structure-specific endonuclease subunit SLX1 (487 aa).

The 83-residue stretch at 27 to 109 (PFYACYLLRS…QKPELSRHLR (83 aa)) folds into the GIY-YIG domain. Positions 44 to 69 (RTYVGSTPDPPRRIRQHNGELKQGAW) are disordered. An SLX1-type zinc finger spans residues 262–328 (CHLCQERIAF…LPYQGLCPNC (67 aa)). Basic and acidic residues predominate over residues 359-396 (KAEKAEKAEKAEKAEKAEKAEKAGRKVRQREMKTKKGD). 2 disordered regions span residues 359–407 (KAEK…QPES) and 433–475 (PARS…SEPE). A compositionally biased stretch (polar residues) spans 397–407 (QSNGTVAQPES). Over residues 438–455 (KSKDVGGEGIRHSTHTDD) the composition is skewed to basic and acidic residues. A compositionally biased stretch (acidic residues) spans 465 to 475 (ETEDESESEPE).

It belongs to the SLX1 family. As to quaternary structure, forms a heterodimer with SLX4. It depends on a divalent metal cation as a cofactor.

It localises to the nucleus. In terms of biological role, catalytic subunit of the SLX1-SLX4 structure-specific endonuclease that resolves DNA secondary structures generated during DNA repair and recombination. Has endonuclease activity towards branched DNA substrates, introducing single-strand cuts in duplex DNA close to junctions with ss-DNA. This is Structure-specific endonuclease subunit SLX1 from Cryptococcus neoformans var. neoformans serotype D (strain B-3501A) (Filobasidiella neoformans).